The chain runs to 83 residues: MSYYQQQCNQPCRPPPVCPPPKCPEPCPPQVWPGPCRPVMCFEPCLPSVWPGPCRPVVCYEQCPPQPWQSTCPPVQFPPCQQK.

Tandem repeats lie at residues 21–29 (PKCPEPCPP), 30–38 (QVWPGPCRP), 39–47 (VMCFEPCLP), 48–56 (SVWPGPCRP), and 57–65 (VVCYEQCPP). The tract at residues 21-65 (PKCPEPCPPQVWPGPCRPVMCFEPCLPSVWPGPCRPVVCYEQCPP) is 5 X 9 AA approximate tandem repeats.

This sequence belongs to the cornifin (SPRR) family. Post-translationally, forms five pairs of intrachain disulfide bonds.

Its subcellular location is the secreted. It is found in the extracellular space. The protein localises to the cytoplasmic vesicle. It localises to the secretory vesicle. Gut bactericidal protein that selectively kills Gram-positive bacteria by binding to negatively charged lipids on bacterial membranes, leading to bacterial membrane permeabilization and disruption. Specifically binds lipids bearing negatively charged headgroups, such as phosphatidic acid, phosphatidylserine (PS), cardiolipin (CL), and phosphatidylinositol phosphates, but not to zwitterionic or neutral lipids. Induced by type-2 cytokines in response to helminth infection and is required to protect against helminth-induced bacterial invasion of intestinal tissue. May also be involved in the development of the cornified envelope of squamous epithelia; however, additional evidences are required to confirm this result in vivo. The sequence is that of Small proline-rich protein 2A3 from Mus musculus (Mouse).